The primary structure comprises 74 residues: Large ribosomal subunit protein bL28 (74 aa).

Belongs to the bacterial ribosomal protein bL28 family.

This Desulforapulum autotrophicum (strain ATCC 43914 / DSM 3382 / VKM B-1955 / HRM2) (Desulfobacterium autotrophicum) protein is Large ribosomal subunit protein bL28.